Reading from the N-terminus, the 177-residue chain is UPF0251 protein Cag_0886 (177 aa).

Residues 147–177 (GGCLSDEESDEQENEQRTVGYPESEEELEIE) form a disordered region.

The protein belongs to the UPF0251 family.

The sequence is that of UPF0251 protein Cag_0886 from Chlorobium chlorochromatii (strain CaD3).